The primary structure comprises 619 residues: 1-deoxy-D-xylulose-5-phosphate synthase (619 aa).

Thiamine diphosphate-binding positions include histidine 80 and 121 to 123 (GHS). Mg(2+) is bound at residue aspartate 152. Thiamine diphosphate is bound by residues 153-154 (GA), asparagine 181, tyrosine 288, and glutamate 370. Mg(2+) is bound at residue asparagine 181.

Belongs to the transketolase family. DXPS subfamily. As to quaternary structure, homodimer. Mg(2+) is required as a cofactor. Thiamine diphosphate serves as cofactor.

It carries out the reaction D-glyceraldehyde 3-phosphate + pyruvate + H(+) = 1-deoxy-D-xylulose 5-phosphate + CO2. Its pathway is metabolic intermediate biosynthesis; 1-deoxy-D-xylulose 5-phosphate biosynthesis; 1-deoxy-D-xylulose 5-phosphate from D-glyceraldehyde 3-phosphate and pyruvate: step 1/1. Functionally, catalyzes the acyloin condensation reaction between C atoms 2 and 3 of pyruvate and glyceraldehyde 3-phosphate to yield 1-deoxy-D-xylulose-5-phosphate (DXP). The protein is 1-deoxy-D-xylulose-5-phosphate synthase of Yersinia pseudotuberculosis serotype O:3 (strain YPIII).